A 439-amino-acid chain; its full sequence is Taxadien-5-alpha-ol O-acetyltransferase (439 aa).

Catalysis depends on proton acceptor residues H164 and D373.

The protein belongs to the plant acyltransferase family.

It catalyses the reaction taxa-4(20),11-dien-5alpha-ol + acetyl-CoA = taxa-4(20),11-dien-5alpha-yl acetate + CoA. Its pathway is alkaloid biosynthesis; taxol biosynthesis; 10-deacetyl-2-debenzoylbaccatin III from taxa-4(20),11-dien-5alpha-ol: step 1/3. The protein is Taxadien-5-alpha-ol O-acetyltransferase (TAT) of Taxus cuspidata (Japanese yew).